Reading from the N-terminus, the 415-residue chain is MQFLPKADPEIFAALKKEDERQENNLEMIASENFVSRAVLEAYTSTLTNKYAEGYPGKRYYNGCHNADVVETLAIERAKKLFGSQYANVQPHSGAQANMAVFLACLEPGDSFLGMNLAHGGHLTHGSPVNVSGKIYKPIPYGVDSKTETINYDEVAKLAREHKPKLIVAGASAYARTIDFSKFAEIAKEVGAKLMADIAHISGLVATGYHPSPIGMFDFVTTTTHKTLRGPRGGLILSTLENEKVLNSRVFPGIQGGPLMHVIAAKAVAFQEALQPDYKKYIETVLANAKTLAEVFVKRGYRVVSGGTDNHLVLLDVSVKGLTGAQAADGLDEVGVTVNKNAIPFDKNPPAVASGIRLGTPALTTRGLKPADMETVGNLICDFLDHPNDDKNRTKVKGGIQEMTQKFPMNQFRLD.

(6S)-5,6,7,8-tetrahydrofolate is bound by residues leucine 117 and 121-123; that span reads GHL. Residue lysine 226 is modified to N6-(pyridoxal phosphate)lysine.

It belongs to the SHMT family. In terms of assembly, homodimer. Pyridoxal 5'-phosphate serves as cofactor.

It is found in the cytoplasm. It carries out the reaction (6R)-5,10-methylene-5,6,7,8-tetrahydrofolate + glycine + H2O = (6S)-5,6,7,8-tetrahydrofolate + L-serine. It functions in the pathway one-carbon metabolism; tetrahydrofolate interconversion. The protein operates within amino-acid biosynthesis; glycine biosynthesis; glycine from L-serine: step 1/1. Catalyzes the reversible interconversion of serine and glycine with tetrahydrofolate (THF) serving as the one-carbon carrier. This reaction serves as the major source of one-carbon groups required for the biosynthesis of purines, thymidylate, methionine, and other important biomolecules. Also exhibits THF-independent aldolase activity toward beta-hydroxyamino acids, producing glycine and aldehydes, via a retro-aldol mechanism. The polypeptide is Serine hydroxymethyltransferase (Leptospira interrogans serogroup Icterohaemorrhagiae serovar copenhageni (strain Fiocruz L1-130)).